We begin with the raw amino-acid sequence, 317 residues long: Beta-ketoacyl-[acyl-carrier-protein] synthase III (317 aa).

Active-site residues include Cys112 and His244. Residues 245–249 (QANLR) are ACP-binding. Asn274 is an active-site residue.

It belongs to the thiolase-like superfamily. FabH family. As to quaternary structure, homodimer.

It localises to the cytoplasm. The catalysed reaction is malonyl-[ACP] + acetyl-CoA + H(+) = 3-oxobutanoyl-[ACP] + CO2 + CoA. It participates in lipid metabolism; fatty acid biosynthesis. Functionally, catalyzes the condensation reaction of fatty acid synthesis by the addition to an acyl acceptor of two carbons from malonyl-ACP. Catalyzes the first condensation reaction which initiates fatty acid synthesis and may therefore play a role in governing the total rate of fatty acid production. Possesses both acetoacetyl-ACP synthase and acetyl transacylase activities. Its substrate specificity determines the biosynthesis of branched-chain and/or straight-chain of fatty acids. This is Beta-ketoacyl-[acyl-carrier-protein] synthase III from Sodalis glossinidius (strain morsitans).